Here is a 254-residue protein sequence, read N- to C-terminus: Imidazole glycerol phosphate synthase subunit HisF (254 aa).

Residues aspartate 12 and aspartate 131 contribute to the active site.

Belongs to the HisA/HisF family. In terms of assembly, heterodimer of HisH and HisF.

The protein resides in the cytoplasm. The catalysed reaction is 5-[(5-phospho-1-deoxy-D-ribulos-1-ylimino)methylamino]-1-(5-phospho-beta-D-ribosyl)imidazole-4-carboxamide + L-glutamine = D-erythro-1-(imidazol-4-yl)glycerol 3-phosphate + 5-amino-1-(5-phospho-beta-D-ribosyl)imidazole-4-carboxamide + L-glutamate + H(+). The protein operates within amino-acid biosynthesis; L-histidine biosynthesis; L-histidine from 5-phospho-alpha-D-ribose 1-diphosphate: step 5/9. Its function is as follows. IGPS catalyzes the conversion of PRFAR and glutamine to IGP, AICAR and glutamate. The HisF subunit catalyzes the cyclization activity that produces IGP and AICAR from PRFAR using the ammonia provided by the HisH subunit. The polypeptide is Imidazole glycerol phosphate synthase subunit HisF (Desulfitobacterium hafniense (strain Y51)).